A 500-amino-acid polypeptide reads, in one-letter code: NAD(P)H-quinone oxidoreductase subunit 2 B, chloroplastic (500 aa).

13 helical membrane-spanning segments follow: residues 14-34 (SILPECILISSLIIILLIDLT), 41-61 (WLYFISLTSLIISITVLLFQL), 78-98 (FNGIFRISIAFSSLLCIPLSM), 116-136 (LTATIGGMFLCGANDLIIIFI), 166-186 (LLMGGASSSILAYGFSWLYGL), 211-231 (ISIVLIFIIAGIAFKLSLVPF), 242-262 (APTSVIAFFSVTSKIAGLALA), 277-297 (WHLILEIIAILSMILGNFIAI), 305-325 (MLAYSSISQIGYFMIGVIAGD), 335-355 (YMLFYIFMNLGTFACITLFGL), 376-396 (ASFLALSLLSLGGIPPLAGFF), 409-429 (GLYLSVSVGLFTSVISIYYYL), and 467-487 (IIICVIGSTFSGIVINPVIAI).

The protein belongs to the complex I subunit 2 family. In terms of assembly, NDH is composed of at least 16 different subunits, 5 of which are encoded in the nucleus.

The protein resides in the plastid. Its subcellular location is the chloroplast thylakoid membrane. It carries out the reaction a plastoquinone + NADH + (n+1) H(+)(in) = a plastoquinol + NAD(+) + n H(+)(out). The enzyme catalyses a plastoquinone + NADPH + (n+1) H(+)(in) = a plastoquinol + NADP(+) + n H(+)(out). NDH shuttles electrons from NAD(P)H:plastoquinone, via FMN and iron-sulfur (Fe-S) centers, to quinones in the photosynthetic chain and possibly in a chloroplast respiratory chain. The immediate electron acceptor for the enzyme in this species is believed to be plastoquinone. Couples the redox reaction to proton translocation, and thus conserves the redox energy in a proton gradient. This is NAD(P)H-quinone oxidoreductase subunit 2 B, chloroplastic from Anthoceros angustus (Hornwort).